We begin with the raw amino-acid sequence, 390 residues long: MMILWIMGKAYLSKEIRDVCINFDRRIKEIKSICKPDIALPKGTLILPGAIDLHTHIRGLKLAYKEDVVSGTSEASYGGITLIGDMPNSVPFVNTMETITAKLREFEYYSRVDYFVYSGVTKDLKKVDKFPIAGYKIFPEDLEKEETLEVLKSMKLKILHPEVPLALRGNRKLRLNIWYEIGALYYVKGYQNVHITHATNIRTVRLAKELGFTVDITPHHLLVDREKECLTKVNPPIRDTNERLWLLQAINEVDTVVSDHAPHASFEKQQPYEICPPGIAALSFTVPFILTLVSKGIISIDRAVELISTNPARILNIPYGEIKENNYANFTIIQFKDWRYSTKYSKVIETPLDGFPLRASIYMTIIQGKVGSLEGEVFPVKGINPFGENK.

2 residues coordinate Zn(2+): histidine 54 and histidine 56. Substrate contacts are provided by residues histidine 56–arginine 58 and asparagine 88. Zn(2+) contacts are provided by lysine 136, histidine 160, histidine 197, and aspartate 259. Lysine 136 is subject to N6-carboxylysine. Aspartate 259 is an active-site residue. Substrate is bound by residues histidine 263 and proline 277–glycine 278.

The protein belongs to the metallo-dependent hydrolases superfamily. DHOase family. Class I DHOase subfamily. Zn(2+) serves as cofactor.

It catalyses the reaction (S)-dihydroorotate + H2O = N-carbamoyl-L-aspartate + H(+). The protein operates within pyrimidine metabolism; UMP biosynthesis via de novo pathway; (S)-dihydroorotate from bicarbonate: step 3/3. Functionally, catalyzes the reversible cyclization of carbamoyl aspartate to dihydroorotate. The chain is Dihydroorotase from Saccharolobus solfataricus (strain ATCC 35092 / DSM 1617 / JCM 11322 / P2) (Sulfolobus solfataricus).